A 457-amino-acid chain; its full sequence is Argininosuccinate lyase (457 aa).

This sequence belongs to the lyase 1 family. Argininosuccinate lyase subfamily.

The protein resides in the cytoplasm. The catalysed reaction is 2-(N(omega)-L-arginino)succinate = fumarate + L-arginine. Its pathway is amino-acid biosynthesis; L-arginine biosynthesis; L-arginine from L-ornithine and carbamoyl phosphate: step 3/3. The protein is Argininosuccinate lyase of Escherichia fergusonii (strain ATCC 35469 / DSM 13698 / CCUG 18766 / IAM 14443 / JCM 21226 / LMG 7866 / NBRC 102419 / NCTC 12128 / CDC 0568-73).